A 92-amino-acid chain; its full sequence is Protein canopy homolog 1 (92 aa).

The protein belongs to the canopy family.

This Homo sapiens (Human) protein is Protein canopy homolog 1 (CNPY1).